A 332-amino-acid chain; its full sequence is tRNA (cytosine(38)-C(5))-methyltransferase (332 aa).

In terms of domain architecture, SAM-dependent MTase C5-type spans 3 to 332 (HKILELYSGI…ISELLKILFE (330 aa)). Residues 12–14 (IGG), 33–34 (DI), 55–56 (NI), and Ser-75 each bind S-adenosyl-L-homocysteine. Cys-78 is an active-site residue. S-adenosyl-L-homocysteine-binding positions include Gln-79, Ser-97, and 316 to 317 (NS).

Belongs to the class I-like SAM-binding methyltransferase superfamily. C5-methyltransferase family.

The protein localises to the cytoplasm. The protein resides in the nucleus. The enzyme catalyses cytidine(38) in tRNA + S-adenosyl-L-methionine = 5-methylcytidine(38) in tRNA + S-adenosyl-L-homocysteine + H(+). It carries out the reaction a 2'-deoxycytidine in DNA + S-adenosyl-L-methionine = a 5-methyl-2'-deoxycytidine in DNA + S-adenosyl-L-homocysteine + H(+). In terms of biological role, specifically methylates cytosine 38 in the anticodon loop of tRNA(Asp). Also has DNA (cytosine-5)-methyltransferase activity. Shows affinity for both tRNA(Asp) and DNA substrates. This chain is tRNA (cytosine(38)-C(5))-methyltransferase, found in Spodoptera frugiperda (Fall armyworm).